A 598-amino-acid polypeptide reads, in one-letter code: Transcriptional repressor tup12 (598 aa).

The disordered stretch occupies residues 118-177 (IASGVVPQSSKTKHGRNSVSFGKYGNAGPFNSDNSSKPLILNNGSSGGTPKNLRSPAIDS). 7 WD repeats span residues 285–325 (EPPI…AMVF), 332–371 (LITL…QQIR), 374–413 (DIAQ…RTVC), 415–454 (WDVE…KVIR), 456–495 (WTSS…NTIK), 510–549 (YKEG…RTIQ), and 552–585 (SPDS…ATGS).

Belongs to the WD repeat TUP1 family.

Transcriptional repressor. This Schizosaccharomyces pombe (strain 972 / ATCC 24843) (Fission yeast) protein is Transcriptional repressor tup12 (tup12).